The chain runs to 286 residues: DNA-directed RNA polymerase subunit Rpo3 (286 aa).

The protein belongs to the archaeal Rpo3/eukaryotic RPB3 RNA polymerase subunit family. In terms of assembly, part of the RNA polymerase complex.

Its subcellular location is the cytoplasm. It catalyses the reaction RNA(n) + a ribonucleoside 5'-triphosphate = RNA(n+1) + diphosphate. Its function is as follows. DNA-dependent RNA polymerase (RNAP) catalyzes the transcription of DNA into RNA using the four ribonucleoside triphosphates as substrates. The protein is DNA-directed RNA polymerase subunit Rpo3 of Aeropyrum pernix (strain ATCC 700893 / DSM 11879 / JCM 9820 / NBRC 100138 / K1).